The chain runs to 508 residues: Maturase K (508 aa).

Belongs to the intron maturase 2 family. MatK subfamily.

The protein localises to the plastid. It is found in the chloroplast. Functionally, usually encoded in the trnK tRNA gene intron. Probably assists in splicing its own and other chloroplast group II introns. The sequence is that of Maturase K from Verbena rigida (Tuberous vervain).